Here is a 368-residue protein sequence, read N- to C-terminus: Spermidine/putrescine import ATP-binding protein PotA (368 aa).

The ABC transporter domain maps to 8–238 (IELRGVTKNF…PANLYVARFV (231 aa)). Position 40 to 47 (40 to 47 (GPSGCGKT)) interacts with ATP.

It belongs to the ABC transporter superfamily. Spermidine/putrescine importer (TC 3.A.1.11.1) family. The complex is composed of two ATP-binding proteins (PotA), two transmembrane proteins (PotB and PotC) and a solute-binding protein (PotD).

The protein localises to the cell inner membrane. The catalysed reaction is ATP + H2O + polyamine-[polyamine-binding protein]Side 1 = ADP + phosphate + polyamineSide 2 + [polyamine-binding protein]Side 1.. In terms of biological role, part of the ABC transporter complex PotABCD involved in spermidine/putrescine import. Responsible for energy coupling to the transport system. This is Spermidine/putrescine import ATP-binding protein PotA from Nitratidesulfovibrio vulgaris (strain ATCC 29579 / DSM 644 / CCUG 34227 / NCIMB 8303 / VKM B-1760 / Hildenborough) (Desulfovibrio vulgaris).